A 125-amino-acid polypeptide reads, in one-letter code: Small ribosomal subunit protein bS6 (125 aa).

Residues 100–125 (SPMVKAREERKPLTEVENNDFEDAEE) form a disordered region. The span at 104–113 (KAREERKPLT) shows a compositional bias: basic and acidic residues. Residues 116–125 (ENNDFEDAEE) show a composition bias toward acidic residues.

It belongs to the bacterial ribosomal protein bS6 family.

Functionally, binds together with bS18 to 16S ribosomal RNA. The chain is Small ribosomal subunit protein bS6 from Histophilus somni (strain 129Pt) (Haemophilus somnus).